The chain runs to 76 residues: uncharacterized protein (76 aa).

Residues 1–24 (MPLRLCQGRKDRASDPVRDDGSPP) are disordered. A compositionally biased stretch (basic and acidic residues) spans 8-22 (GRKDRASDPVRDDGS).

This is an uncharacterized protein from Dryophytes versicolor (chameleon treefrog).